A 365-amino-acid polypeptide reads, in one-letter code: Chorismate synthase (365 aa).

Residues R48 and R54 each coordinate NADP(+). Residues 125–127, 238–239, A278, 293–297, and R319 each bind FMN; these read RSS, NA, and KPTSS.

Belongs to the chorismate synthase family. In terms of assembly, homotetramer. FMNH2 serves as cofactor.

The catalysed reaction is 5-O-(1-carboxyvinyl)-3-phosphoshikimate = chorismate + phosphate. Its pathway is metabolic intermediate biosynthesis; chorismate biosynthesis; chorismate from D-erythrose 4-phosphate and phosphoenolpyruvate: step 7/7. In terms of biological role, catalyzes the anti-1,4-elimination of the C-3 phosphate and the C-6 proR hydrogen from 5-enolpyruvylshikimate-3-phosphate (EPSP) to yield chorismate, which is the branch point compound that serves as the starting substrate for the three terminal pathways of aromatic amino acid biosynthesis. This reaction introduces a second double bond into the aromatic ring system. The sequence is that of Chorismate synthase from Pseudoalteromonas translucida (strain TAC 125).